Reading from the N-terminus, the 340-residue chain is Flavonoid 7-O-methyltransferase 2 (340 aa).

Residue aspartate 207 coordinates S-adenosyl-L-methionine. The active-site Proton acceptor is histidine 245.

It belongs to the class I-like SAM-binding methyltransferase superfamily. Cation-independent O-methyltransferase family. In terms of assembly, homodimer. Expressed in leaves.

The enzyme catalyses scutellarein 4'-methyl ether + S-adenosyl-L-methionine = ladanein + S-adenosyl-L-homocysteine. The catalysed reaction is acacetin + S-adenosyl-L-methionine = apigenin 4',7-dimethyl ether + S-adenosyl-L-homocysteine. It carries out the reaction diosmetin + S-adenosyl-L-methionine = luteolin 4',7-dimethyl ether + S-adenosyl-L-homocysteine. It catalyses the reaction chrysoeriol + S-adenosyl-L-methionine = velutin + S-adenosyl-L-homocysteine. The enzyme catalyses (2S)-naringenin + S-adenosyl-L-methionine = (2S)-sakuranetin + S-adenosyl-L-homocysteine + H(+). The catalysed reaction is apigenin + S-adenosyl-L-methionine = genkwanin + S-adenosyl-L-homocysteine + H(+). It carries out the reaction luteolin + S-adenosyl-L-methionine = luteolin 7-methyl ether + S-adenosyl-L-homocysteine + H(+). It catalyses the reaction scutellarein + S-adenosyl-L-methionine = scutellarein 7-methyl ether + S-adenosyl-L-homocysteine. Its pathway is flavonoid metabolism. In terms of biological role, flavonoid 7-O-methyltransferase involved in the biosynthesis of polymethoxylated flavonoids natural products such as nevadensin and salvigenin, aroma compounds which contribute to the flavor of sweet basil, and exhibit pharmacological activities such as anti-allergic, anti-oxidant, antibacterial, anti-proliferative, and anti-inflammatory effects. Catalyzes S-adenosylmethionine-dependent regioselective 7-O-methylation of flavonoids; active on various hydroxylated flavonoid substrates, including apigenin (API) and luteolin (LUT), and, with a lower efficiency, scutellarein (SCU), naringenin (NAR), chrysoeriol (CHRYS), diosmetin (DIOS), acacetin (ACA) and scutellarein-7-methyl ether (SCU7Me). The polypeptide is Flavonoid 7-O-methyltransferase 2 (Ocimum basilicum (Sweet basil)).